An 867-amino-acid polypeptide reads, in one-letter code: uncharacterized protein (867 aa).

The zn(2)-C6 fungal-type DNA-binding region spans 76–108 (CDFCRQKKIRCDMDQSPRPGNACINCRKHHLDC). Disordered regions lie at residues 110–167 (FTRT…ITPV) and 217–257 (PQLA…NSNL). 2 stretches are compositionally biased toward polar residues: residues 137–167 (SAKS…ITPV) and 248–257 (SISSYTNSNL).

Its subcellular location is the nucleus. This is an uncharacterized protein from Schizosaccharomyces pombe (strain 972 / ATCC 24843) (Fission yeast).